Consider the following 428-residue polypeptide: Spliceosome RNA helicase DDX39B (428 aa).

The segment covering 1–19 (MAENDVDNELLDYEEDEVE) has biased composition (acidic residues). Positions 1 to 32 (MAENDVDNELLDYEEDEVETAAGGDGSEAPAK) are disordered. Position 2 is an N-acetylalanine (Ala2). Lys36 is modified (N6-acetyllysine; alternate). Lys36 participates in a covalent cross-link: Glycyl lysine isopeptide (Lys-Gly) (interchain with G-Cter in SUMO2); alternate. Residues Ser38 and Ser41 each carry the phosphoserine modification. A Q motif motif is present at residues 45-73 (SGFRDFLLKPELLRAIVDCGFEHPSEVQH). The 174-residue stretch at 76–249 (IPQAILGMDV…RKFMQDPMEI (174 aa)) folds into the Helicase ATP-binding domain. Residue 89-96 (AKSGMGKT) participates in ATP binding. Thr172 carries the post-translational modification Phosphothreonine. Positions 196–199 (DECD) match the DECD box motif. The Helicase C-terminal domain maps to 261–422 (GLQQYYVKLK…ELPDEIDISS (162 aa)).

Belongs to the DEAD box helicase family. DECD subfamily. In terms of assembly, homodimer, and heterodimer with DDX39A. DDX39B interacts with the THO subcomplex to form the THO-DDX39B complex which multimerizes into a 28-subunit tetrameric assembly. Component of the transcription/export (TREX) complex at least composed of ALYREF/THOC4, DDX39B, SARNP/CIP29, CHTOP and the THO subcomplex; in the complex interacts with THOC2. THOC1-THOC2-THOC3-DDX39B subcomplex is sufficient for the interaction with export factor NXF1-NXT1. TREX seems to have a dynamic structure involving ATP-dependent remodeling. Within the TREX complex bridges ALYREF/THOC4 and the THO subcomplex, and, in a ATP-dependent manner, ALYREF/THOC4 and SARNP/CIP29. Component of the spliceosome. Interacts directly with U2AF2. Interacts with RBM8A, RNPS1 and SRRM1, FYTTD1/UIF, THOC1, MX1 and POLDIP3. Interacts with LUZP4. Interacts with SARNP/CIP29 (via the C-terminal domain); the interaction is direct and facilitates RNA binding of DDX39B.

The protein localises to the nucleus. Its subcellular location is the nucleus speckle. It localises to the cytoplasm. The enzyme catalyses ATP + H2O = ADP + phosphate + H(+). Its function is as follows. Involved in nuclear export of spliced and unspliced mRNA. Component of the TREX complex which is thought to couple mRNA transcription, processing and nuclear export, and specifically associates with spliced mRNA and not with unspliced pre-mRNA. The TREX complex is recruited to spliced mRNAs by a transcription-independent mechanism, binds to mRNA upstream of the exon-junction complex (EJC) and is recruited in a splicing- and cap-dependent manner to a region near the 5' end of the mRNA where it functions in mRNA export to the cytoplasm via the TAP/NXF1 pathway. The THOC1-THOC2-THOC3 core complex alone is sufficient to promote ATPase activity of DDX39B; in the complex THOC2 is the only component that directly interacts with DDX39B. Associates with SARNP/CIP29, which facilitates RNA binding of DDX39B and likely plays a role in mRNA export. May undergo several rounds of ATP hydrolysis during assembly of TREX to drive subsequent loading of components such as ALYREF/THOC4 and CHTOP onto mRNA. Also associates with pre-mRNA independent of ALYREF/THOC4. Involved in the nuclear export of intronless mRNA; the ATP-bound form is proposed to recruit export adapter ALYREF/THOC4 to intronless mRNA; its ATPase activity is cooperatively stimulated by RNA and ALYREF/THOC4 and ATP hydrolysis is thought to trigger the dissociation from RNA to allow the association of ALYREF/THOC4 and the NXF1-NXT1 heterodimer. Involved in transcription elongation and genome stability. Splice factor that is required for the first ATP-dependent step in spliceosome assembly and for the interaction of U2 snRNP with the branchpoint. Has both RNA-stimulated ATP binding/hydrolysis activity and ATP-dependent RNA unwinding activity. Even with the stimulation of RNA, the ATPase activity is weak. Can only hydrolyze ATP but not other NTPs. The RNA stimulation of ATPase activity does not have a strong preference for the sequence and length of the RNA. However, ssRNA stimulates the ATPase activity much more strongly than dsRNA. Can unwind 5' or 3' overhangs or blunt end RNA duplexes in vitro. The ATPase and helicase activities are not influenced by U2AF2; the effect of ALYREF/THOC4 is reported conflictingly. This Canis lupus familiaris (Dog) protein is Spliceosome RNA helicase DDX39B (DDX39B).